The following is a 172-amino-acid chain: Shikimate kinase (172 aa).

Gly-11–Thr-16 is a binding site for ATP. Ser-15 provides a ligand contact to Mg(2+). 3 residues coordinate substrate: Asp-33, Arg-57, and Gly-79. Arg-117 serves as a coordination point for ATP. Arg-136 serves as a coordination point for substrate. Arg-153 serves as a coordination point for ATP.

The protein belongs to the shikimate kinase family. Monomer. Mg(2+) is required as a cofactor.

The protein localises to the cytoplasm. The enzyme catalyses shikimate + ATP = 3-phosphoshikimate + ADP + H(+). The protein operates within metabolic intermediate biosynthesis; chorismate biosynthesis; chorismate from D-erythrose 4-phosphate and phosphoenolpyruvate: step 5/7. In terms of biological role, catalyzes the specific phosphorylation of the 3-hydroxyl group of shikimic acid using ATP as a cosubstrate. The chain is Shikimate kinase from Pseudomonas syringae pv. syringae (strain B728a).